Reading from the N-terminus, the 155-residue chain is Protein archease-like (155 aa).

The Ca(2+) site is built by aspartate 26, aspartate 154, and isoleucine 155.

The protein belongs to the archease family.

In terms of biological role, component of the tRNA-splicing ligase complex required to facilitate the enzymatic turnover of catalytic subunit RtcB (F16A11.2). This Caenorhabditis elegans protein is Protein archease-like.